The sequence spans 349 residues: UPF0324 inner membrane protein YeiH (349 aa).

Topologically, residues 1 to 12 (MTNITLQKQHRT) are periplasmic. A helical transmembrane segment spans residues 13–32 (LWHFIPGLALSAVITGVALW). Residues 33–35 (GGS) are Cytoplasmic-facing. Residues 36 to 58 (IPAVAGAGFSALTLAILLGMVLG) form a helical membrane-spanning segment. Topologically, residues 59–99 (NTIYPHIWKSCDGGVLFAKQYLLRLGIILYGFRLTFSQIAD) are periplasmic. The chain crosses the membrane as a helical span at residues 100 to 122 (VGISGIIIDVLTLSSTFLLACFL). The Cytoplasmic portion of the chain corresponds to 123–131 (GQKVFGLDK). The helical transmembrane segment at 132–151 (HTSWLIGAGSSICGAAAVLA) threads the bilayer. The Periplasmic segment spans residues 152-162 (TEPVVKAEASK). A helical transmembrane segment spans residues 163-185 (VTVAVATVVIFGTVAIFLYPAIY). Residues 186 to 261 (PLMSQWFSPE…SGTNSGEKSK (76 aa)) are Cytoplasmic-facing. The helical transmembrane segment at 262–283 (ITIPWFAILFIVVAIFNSFHLL) threads the bilayer. Residues 284 to 289 (PQSVVN) are Periplasmic-facing. Residues 290–312 (MLVTLDTFLLAMAMAALGLTTHV) traverse the membrane as a helical segment. Residues 313 to 321 (SALKKAGAK) are Cytoplasmic-facing. Residues 322–344 (PLLMALVLFAWLIVGGGAINYVI) traverse the membrane as a helical segment. Over 345–349 (QSVIA) the chain is Periplasmic.

The protein belongs to the UPF0324 family.

It is found in the cell inner membrane. The sequence is that of UPF0324 inner membrane protein YeiH (yeiH) from Escherichia coli O6:H1 (strain CFT073 / ATCC 700928 / UPEC).